The chain runs to 94 residues: Defensin-7 (94 aa).

An N-terminal signal peptide occupies residues M1–A19. 2 disulfide bridges follow: C65/C93 and C72/C92.

The protein belongs to the alpha-defensin family.

The protein resides in the secreted. Has antimicrobial activity. The protein is Defensin-7 (DEFA7) of Pan troglodytes (Chimpanzee).